The chain runs to 120 residues: Large ribosomal subunit protein uL18 (120 aa).

The segment at 1–29 is disordered; that stretch reads MITKPNKNAGRKKRHAHVRRTLSGTPQRP. Basic residues predominate over residues 9–20; sequence AGRKKRHAHVRR.

Belongs to the universal ribosomal protein uL18 family. In terms of assembly, part of the 50S ribosomal subunit; part of the 5S rRNA/L5/L18/L25 subcomplex. Contacts the 5S and 23S rRNAs.

Functionally, this is one of the proteins that bind and probably mediate the attachment of the 5S RNA into the large ribosomal subunit, where it forms part of the central protuberance. The chain is Large ribosomal subunit protein uL18 from Shouchella clausii (strain KSM-K16) (Alkalihalobacillus clausii).